The sequence spans 207 residues: MKFIIARKVGMTRLWKDEKVVPVTVLKAGPCVVVQKKTVEKDGYNAIQLGFEEVNEKKLTKPMLGVFKKANVKPMRVLKEFRVENVDQYSVGQEITVAIFQEGDKIDITGWTKGRGYSGAMKRWNFQGGPKAHGAKFHRELGSVGQHTEPARIFKGKRMPGRYGNERVTILNSEVVTIDAQNNLLAVKGGVPGARGSLVIIRSAVKQ.

The protein belongs to the universal ribosomal protein uL3 family. As to quaternary structure, part of the 50S ribosomal subunit. Forms a cluster with proteins L14 and L19.

Functionally, one of the primary rRNA binding proteins, it binds directly near the 3'-end of the 23S rRNA, where it nucleates assembly of the 50S subunit. This Fervidobacterium nodosum (strain ATCC 35602 / DSM 5306 / Rt17-B1) protein is Large ribosomal subunit protein uL3.